Here is a 167-residue protein sequence, read N- to C-terminus: Ribosome maturation factor RimM (167 aa).

One can recognise a PRC barrel domain in the interval 94–165; the sequence is ENEYYYSDII…TIRITPMEGL (72 aa).

The protein belongs to the RimM family. As to quaternary structure, binds ribosomal protein uS19.

The protein localises to the cytoplasm. Functionally, an accessory protein needed during the final step in the assembly of 30S ribosomal subunit, possibly for assembly of the head region. Essential for efficient processing of 16S rRNA. May be needed both before and after RbfA during the maturation of 16S rRNA. It has affinity for free ribosomal 30S subunits but not for 70S ribosomes. In Staphylococcus haemolyticus (strain JCSC1435), this protein is Ribosome maturation factor RimM.